Consider the following 247-residue polypeptide: 2,3-bisphosphoglycerate-dependent phosphoglycerate mutase (247 aa).

Substrate contacts are provided by residues Arg-9–Asn-16, Thr-22–Gly-23, Arg-61, Glu-88–Tyr-91, Lys-99, Arg-115–Arg-116, and Gly-183–Asn-184. The Tele-phosphohistidine intermediate role is filled by His-10. Glu-88 serves as the catalytic Proton donor/acceptor.

The protein belongs to the phosphoglycerate mutase family. BPG-dependent PGAM subfamily.

It catalyses the reaction (2R)-2-phosphoglycerate = (2R)-3-phosphoglycerate. Its pathway is carbohydrate degradation; glycolysis; pyruvate from D-glyceraldehyde 3-phosphate: step 3/5. In terms of biological role, catalyzes the interconversion of 2-phosphoglycerate and 3-phosphoglycerate. The polypeptide is 2,3-bisphosphoglycerate-dependent phosphoglycerate mutase (Nocardioides sp. (strain ATCC BAA-499 / JS614)).